A 443-amino-acid chain; its full sequence is Xaa-Pro dipeptidase (443 aa).

Positions 246, 257, 339, 384, and 423 each coordinate Mn(2+).

It belongs to the peptidase M24B family. Bacterial-type prolidase subfamily. It depends on Mn(2+) as a cofactor.

The catalysed reaction is Xaa-L-Pro dipeptide + H2O = an L-alpha-amino acid + L-proline. Functionally, splits dipeptides with a prolyl residue in the C-terminal position. In Enterobacter sp. (strain 638), this protein is Xaa-Pro dipeptidase.